A 562-amino-acid polypeptide reads, in one-letter code: Dihydroxy-acid dehydratase (562 aa).

Mg(2+) is bound at residue Asp-80. Cys-121 lines the [2Fe-2S] cluster pocket. Mg(2+) is bound by residues Asp-122 and Lys-123. Residue Lys-123 is modified to N6-carboxylysine. Cys-194 is a binding site for [2Fe-2S] cluster. Glu-446 lines the Mg(2+) pocket. Ser-472 serves as the catalytic Proton acceptor.

The protein belongs to the IlvD/Edd family. Homodimer. [2Fe-2S] cluster is required as a cofactor. It depends on Mg(2+) as a cofactor.

The catalysed reaction is (2R)-2,3-dihydroxy-3-methylbutanoate = 3-methyl-2-oxobutanoate + H2O. The enzyme catalyses (2R,3R)-2,3-dihydroxy-3-methylpentanoate = (S)-3-methyl-2-oxopentanoate + H2O. Its pathway is amino-acid biosynthesis; L-isoleucine biosynthesis; L-isoleucine from 2-oxobutanoate: step 3/4. The protein operates within amino-acid biosynthesis; L-valine biosynthesis; L-valine from pyruvate: step 3/4. Its function is as follows. Functions in the biosynthesis of branched-chain amino acids. Catalyzes the dehydration of (2R,3R)-2,3-dihydroxy-3-methylpentanoate (2,3-dihydroxy-3-methylvalerate) into 2-oxo-3-methylpentanoate (2-oxo-3-methylvalerate) and of (2R)-2,3-dihydroxy-3-methylbutanoate (2,3-dihydroxyisovalerate) into 2-oxo-3-methylbutanoate (2-oxoisovalerate), the penultimate precursor to L-isoleucine and L-valine, respectively. The protein is Dihydroxy-acid dehydratase of Macrococcus caseolyticus (strain JCSC5402) (Macrococcoides caseolyticum).